Here is a 150-residue protein sequence, read N- to C-terminus: 3-hydroxyacyl-[acyl-carrier-protein] dehydratase FabZ (150 aa).

Residue histidine 54 is part of the active site.

Belongs to the thioester dehydratase family. FabZ subfamily.

It localises to the cytoplasm. It catalyses the reaction a (3R)-hydroxyacyl-[ACP] = a (2E)-enoyl-[ACP] + H2O. Involved in unsaturated fatty acids biosynthesis. Catalyzes the dehydration of short chain beta-hydroxyacyl-ACPs and long chain saturated and unsaturated beta-hydroxyacyl-ACPs. The protein is 3-hydroxyacyl-[acyl-carrier-protein] dehydratase FabZ of Vibrio atlanticus (strain LGP32) (Vibrio splendidus (strain Mel32)).